Here is a 354-residue protein sequence, read N- to C-terminus: Phosphate acyltransferase (354 aa).

It belongs to the PlsX family. As to quaternary structure, homodimer. Probably interacts with PlsY.

It is found in the cytoplasm. It catalyses the reaction a fatty acyl-[ACP] + phosphate = an acyl phosphate + holo-[ACP]. It functions in the pathway lipid metabolism; phospholipid metabolism. In terms of biological role, catalyzes the reversible formation of acyl-phosphate (acyl-PO(4)) from acyl-[acyl-carrier-protein] (acyl-ACP). This enzyme utilizes acyl-ACP as fatty acyl donor, but not acyl-CoA. The chain is Phosphate acyltransferase from Nitrobacter hamburgensis (strain DSM 10229 / NCIMB 13809 / X14).